The following is a 146-amino-acid chain: Phage-like element PBSX protein XkdJ (146 aa).

To B.subtilis YqbJ.

This chain is Phage-like element PBSX protein XkdJ (xkdJ), found in Bacillus subtilis (strain 168).